Here is a 349-residue protein sequence, read N- to C-terminus: uncharacterized protein (349 aa).

Serine 2 carries the post-translational modification Phosphoserine.

This is an uncharacterized protein from Saccharomyces cerevisiae (strain ATCC 204508 / S288c) (Baker's yeast).